We begin with the raw amino-acid sequence, 243 residues long: MPSTPESDPTQPGDRPARPALRPLTPVEGRVLGVLVEKQHTVPDTYPLSLNALASGCNQKTARAPVMNVSEAEILEAIDGLKSLSLVFEGSSSRVPRFEHNMQRALGIPSQSVALLALLLLRGPQTAAELRLNTARLHSFADISSVEAFLDELASQTPPRVVRLPRAPGARENRWMHLLSGEAGAAVAAEESARNTDGDAAPSAELEQLRTEQQALAEKVARLQGLVEHMAAQLGISADEFLG.

The segment covering M1–T10 has biased composition (polar residues). Residues M1–P23 are disordered.

It belongs to the UPF0502 family.

This chain is UPF0502 protein RALTA_B0914, found in Cupriavidus taiwanensis (strain DSM 17343 / BCRC 17206 / CCUG 44338 / CIP 107171 / LMG 19424 / R1) (Ralstonia taiwanensis (strain LMG 19424)).